Consider the following 333-residue polypeptide: Fibronectin type III domain-containing protein 11 (333 aa).

The Fibronectin type-III domain occupies Pro-212–Gly-310. The interval Thr-307–Arg-333 is disordered.

In Bos taurus (Bovine), this protein is Fibronectin type III domain-containing protein 11.